Reading from the N-terminus, the 357-residue chain is UDP-N-acetylglucosamine--N-acetylmuramyl-(pentapeptide) pyrophosphoryl-undecaprenol N-acetylglucosamine transferase (357 aa).

Residues 13–15 (TGG), Asn-125, Arg-161, Ser-189, Ile-243, and Gln-288 each bind UDP-N-acetyl-alpha-D-glucosamine.

The protein belongs to the glycosyltransferase 28 family. MurG subfamily.

The protein resides in the cell inner membrane. The enzyme catalyses di-trans,octa-cis-undecaprenyl diphospho-N-acetyl-alpha-D-muramoyl-L-alanyl-D-glutamyl-meso-2,6-diaminopimeloyl-D-alanyl-D-alanine + UDP-N-acetyl-alpha-D-glucosamine = di-trans,octa-cis-undecaprenyl diphospho-[N-acetyl-alpha-D-glucosaminyl-(1-&gt;4)]-N-acetyl-alpha-D-muramoyl-L-alanyl-D-glutamyl-meso-2,6-diaminopimeloyl-D-alanyl-D-alanine + UDP + H(+). The protein operates within cell wall biogenesis; peptidoglycan biosynthesis. Cell wall formation. Catalyzes the transfer of a GlcNAc subunit on undecaprenyl-pyrophosphoryl-MurNAc-pentapeptide (lipid intermediate I) to form undecaprenyl-pyrophosphoryl-MurNAc-(pentapeptide)GlcNAc (lipid intermediate II). This Bordetella pertussis (strain Tohama I / ATCC BAA-589 / NCTC 13251) protein is UDP-N-acetylglucosamine--N-acetylmuramyl-(pentapeptide) pyrophosphoryl-undecaprenol N-acetylglucosamine transferase.